The primary structure comprises 128 residues: uncharacterized protein (128 aa).

2 helical membrane passes run 45–65 (GYFH…LFPF) and 95–115 (FMSH…LSCF).

It localises to the membrane. This is an uncharacterized protein from Saccharomyces cerevisiae (strain ATCC 204508 / S288c) (Baker's yeast).